A 237-amino-acid chain; its full sequence is MQFPSLSCGILIKRYKRFLADILLPNGEQITLHCPNTGAMTGCATAGDTVWFSTSDNPKRKYAHTWELTQTQAGDFICVNTQRANQLVQEALEKRWIAELAEYQTVLPEQKYGSENSRIDFLLKADNQPDCFVEVKSTTLLTENGLGMFPDAKTERGQKHLRELAAIAESGQQAVIFFAILHTGIQRFAVAKQIDPQYAALFEQAKNTGVKVLAYKAQIELVQGKPEAMNLQFSCEI.

It belongs to the SfsA family.

The sequence is that of Sugar fermentation stimulation protein homolog from Actinobacillus pleuropneumoniae serotype 3 (strain JL03).